The sequence spans 79 residues: Acyl carrier protein (79 aa).

Residues 2-77 enclose the Carrier domain; sequence SEVAEKVKKI…DAIDYIEKKK (76 aa). S37 is modified (O-(pantetheine 4'-phosphoryl)serine).

It belongs to the acyl carrier protein (ACP) family. 4'-phosphopantetheine is transferred from CoA to a specific serine of apo-ACP by AcpS. This modification is essential for activity because fatty acids are bound in thioester linkage to the sulfhydryl of the prosthetic group.

It is found in the cytoplasm. It participates in lipid metabolism; fatty acid biosynthesis. Carrier of the growing fatty acid chain in fatty acid biosynthesis. This chain is Acyl carrier protein, found in Acidiphilium cryptum (strain JF-5).